We begin with the raw amino-acid sequence, 414 residues long: Ribulose bisphosphate carboxylase large chain (414 aa).

Substrate-binding residues include asparagine 102 and threonine 152. Catalysis depends on lysine 154, which acts as the Proton acceptor. Lysine 156 serves as a coordination point for substrate. Lysine 180, aspartate 182, and glutamate 183 together coordinate Mg(2+). Position 180 is an N6-carboxylysine (lysine 180). The Proton acceptor role is filled by histidine 273. Residues arginine 274, histidine 306, and serine 358 each contribute to the substrate site.

The protein belongs to the RuBisCO large chain family. Type I subfamily. As to quaternary structure, heterohexadecamer of 8 large chains and 8 small chains; disulfide-linked. The disulfide link is formed within the large subunit homodimers. Mg(2+) is required as a cofactor. The disulfide bond which can form in the large chain dimeric partners within the hexadecamer appears to be associated with oxidative stress and protein turnover.

It localises to the plastid. It is found in the chloroplast. The catalysed reaction is 2 (2R)-3-phosphoglycerate + 2 H(+) = D-ribulose 1,5-bisphosphate + CO2 + H2O. It carries out the reaction D-ribulose 1,5-bisphosphate + O2 = 2-phosphoglycolate + (2R)-3-phosphoglycerate + 2 H(+). Its function is as follows. RuBisCO catalyzes two reactions: the carboxylation of D-ribulose 1,5-bisphosphate, the primary event in carbon dioxide fixation, as well as the oxidative fragmentation of the pentose substrate in the photorespiration process. Both reactions occur simultaneously and in competition at the same active site. This chain is Ribulose bisphosphate carboxylase large chain (rbcL), found in Antrophyum reticulatum (Ox-tongue fern).